The chain runs to 235 residues: Protocatechuate 3,4-dioxygenase beta chain (235 aa).

Residues Y107, Y146, H159, and H161 each coordinate Fe cation.

This sequence belongs to the intradiol ring-cleavage dioxygenase family. As to quaternary structure, the enzyme is an oligomer of 12 copies of the alpha and beta chains. It depends on Fe(3+) as a cofactor.

The catalysed reaction is 3,4-dihydroxybenzoate + O2 = 3-carboxy-cis,cis-muconate + 2 H(+). It participates in aromatic compound metabolism; beta-ketoadipate pathway; 3-carboxy-cis,cis-muconate from 3,4-dihydroxybenzoate: step 1/1. In terms of biological role, plays an essential role in the utilization of numerous aromatic and hydroaromatic compounds via the beta-ketoadipate pathway. The protein is Protocatechuate 3,4-dioxygenase beta chain (pcaH) of Burkholderia cepacia (Pseudomonas cepacia).